A 380-amino-acid polypeptide reads, in one-letter code: tRNA-specific 2-thiouridylase MnmA (380 aa).

ATP is bound by residues 14-21 (GLSGGVDS) and methionine 40. Residues 100-102 (NPD) form an interaction with target base in tRNA region. Cysteine 105 functions as the Nucleophile in the catalytic mechanism. Cysteine 105 and cysteine 203 are disulfide-bonded. ATP is bound at residue glycine 129. The tract at residues 153–155 (KDQ) is interaction with tRNA. Cysteine 203 acts as the Cysteine persulfide intermediate in catalysis. The tract at residues 322-323 (RY) is interaction with tRNA.

Belongs to the MnmA/TRMU family.

The protein resides in the cytoplasm. The enzyme catalyses S-sulfanyl-L-cysteinyl-[protein] + uridine(34) in tRNA + AH2 + ATP = 2-thiouridine(34) in tRNA + L-cysteinyl-[protein] + A + AMP + diphosphate + H(+). Its function is as follows. Catalyzes the 2-thiolation of uridine at the wobble position (U34) of tRNA, leading to the formation of s(2)U34. The protein is tRNA-specific 2-thiouridylase MnmA of Leptothrix cholodnii (strain ATCC 51168 / LMG 8142 / SP-6) (Leptothrix discophora (strain SP-6)).